A 148-amino-acid polypeptide reads, in one-letter code: Lysozyme C (148 aa).

Positions methionine 1–glycine 18 are cleaved as a signal peptide. The region spanning lysine 19 to valine 148 is the C-type lysozyme domain. 4 cysteine pairs are disulfide-bonded: cysteine 24-cysteine 146, cysteine 48-cysteine 134, cysteine 83-cysteine 99, and cysteine 95-cysteine 113. Active-site residues include glutamate 53 and aspartate 71.

It belongs to the glycosyl hydrolase 22 family. As to quaternary structure, monomer.

It catalyses the reaction Hydrolysis of (1-&gt;4)-beta-linkages between N-acetylmuramic acid and N-acetyl-D-glucosamine residues in a peptidoglycan and between N-acetyl-D-glucosamine residues in chitodextrins.. In terms of biological role, lysozymes have primarily a bacteriolytic function; those in tissues and body fluids are associated with the monocyte-macrophage system and enhance the activity of immunoagents. This chain is Lysozyme C (LYZ), found in Halichoerus grypus (Gray seal).